The primary structure comprises 94 residues: Phosphoribosyl-ATP pyrophosphatase (94 aa).

The protein belongs to the PRA-PH family.

It is found in the cytoplasm. It carries out the reaction 1-(5-phospho-beta-D-ribosyl)-ATP + H2O = 1-(5-phospho-beta-D-ribosyl)-5'-AMP + diphosphate + H(+). It participates in amino-acid biosynthesis; L-histidine biosynthesis; L-histidine from 5-phospho-alpha-D-ribose 1-diphosphate: step 2/9. The protein is Phosphoribosyl-ATP pyrophosphatase of Saccharolobus islandicus (strain M.16.27) (Sulfolobus islandicus).